Consider the following 84-residue polypeptide: RNA-binding protein Hfq (84 aa).

The 60-residue stretch at Asp10–Ile69 folds into the Sm domain.

It belongs to the Hfq family. Homohexamer.

Its function is as follows. RNA chaperone that binds small regulatory RNA (sRNAs) and mRNAs to facilitate mRNA translational regulation in response to envelope stress, environmental stress and changes in metabolite concentrations. Also binds with high specificity to tRNAs. The chain is RNA-binding protein Hfq from Nitrosomonas europaea (strain ATCC 19718 / CIP 103999 / KCTC 2705 / NBRC 14298).